Reading from the N-terminus, the 273-residue chain is Dermonecrotic toxin SdSicTox-betaIIB1bxiv (273 aa).

The active site involves histidine 4. Mg(2+) contacts are provided by glutamate 24 and aspartate 26. The Nucleophile role is filled by histidine 40. Cystine bridges form between cysteine 44–cysteine 50 and cysteine 46–cysteine 189. Aspartate 84 provides a ligand contact to Mg(2+).

Belongs to the arthropod phospholipase D family. Class II subfamily. Requires Mg(2+) as cofactor. In terms of tissue distribution, expressed by the venom gland.

It is found in the secreted. The enzyme catalyses an N-(acyl)-sphingosylphosphocholine = an N-(acyl)-sphingosyl-1,3-cyclic phosphate + choline. The catalysed reaction is an N-(acyl)-sphingosylphosphoethanolamine = an N-(acyl)-sphingosyl-1,3-cyclic phosphate + ethanolamine. It carries out the reaction a 1-acyl-sn-glycero-3-phosphocholine = a 1-acyl-sn-glycero-2,3-cyclic phosphate + choline. It catalyses the reaction a 1-acyl-sn-glycero-3-phosphoethanolamine = a 1-acyl-sn-glycero-2,3-cyclic phosphate + ethanolamine. Its function is as follows. Dermonecrotic toxins cleave the phosphodiester linkage between the phosphate and headgroup of certain phospholipids (sphingolipid and lysolipid substrates), forming an alcohol (often choline) and a cyclic phosphate. This toxin acts on sphingomyelin (SM). It may also act on ceramide phosphoethanolamine (CPE), lysophosphatidylcholine (LPC) and lysophosphatidylethanolamine (LPE), but not on lysophosphatidylserine (LPS), and lysophosphatidylglycerol (LPG). It acts by transphosphatidylation, releasing exclusively cyclic phosphate products as second products. Induces dermonecrosis, hemolysis, increased vascular permeability, edema, inflammatory response, and platelet aggregation. In Sicarius cf. damarensis (strain GJB-2008) (Six-eyed sand spider), this protein is Dermonecrotic toxin SdSicTox-betaIIB1bxiv.